Reading from the N-terminus, the 661-residue chain is UvrABC system protein B (661 aa).

Residues 24 to 209 (NGLNKGYRFQ…IFPSYQDEGI (186 aa)) enclose the Helicase ATP-binding domain. Position 37–44 (37–44 (GVTGSGKT)) interacts with ATP. The Beta-hairpin signature appears at 90–113 (YYDYYQPEAYVPTKDLYIEKSADI). Residues 430-594 (DLVNEIVQVK…IIKPLMEDIF (165 aa)) enclose the Helicase C-terminal domain. Residues 622–657 (EEYAALLEEEMYKAASELRYEDAARLRDELFKIKEE) enclose the UVR domain.

It belongs to the UvrB family. In terms of assembly, forms a heterotetramer with UvrA during the search for lesions. Interacts with UvrC in an incision complex.

Its subcellular location is the cytoplasm. The UvrABC repair system catalyzes the recognition and processing of DNA lesions. A damage recognition complex composed of 2 UvrA and 2 UvrB subunits scans DNA for abnormalities. Upon binding of the UvrA(2)B(2) complex to a putative damaged site, the DNA wraps around one UvrB monomer. DNA wrap is dependent on ATP binding by UvrB and probably causes local melting of the DNA helix, facilitating insertion of UvrB beta-hairpin between the DNA strands. Then UvrB probes one DNA strand for the presence of a lesion. If a lesion is found the UvrA subunits dissociate and the UvrB-DNA preincision complex is formed. This complex is subsequently bound by UvrC and the second UvrB is released. If no lesion is found, the DNA wraps around the other UvrB subunit that will check the other stand for damage. This Fervidobacterium nodosum (strain ATCC 35602 / DSM 5306 / Rt17-B1) protein is UvrABC system protein B.